Reading from the N-terminus, the 197-residue chain is Imidazoleglycerol-phosphate dehydratase (197 aa).

The protein belongs to the imidazoleglycerol-phosphate dehydratase family.

The protein localises to the cytoplasm. It carries out the reaction D-erythro-1-(imidazol-4-yl)glycerol 3-phosphate = 3-(imidazol-4-yl)-2-oxopropyl phosphate + H2O. The protein operates within amino-acid biosynthesis; L-histidine biosynthesis; L-histidine from 5-phospho-alpha-D-ribose 1-diphosphate: step 6/9. In Rhodopseudomonas palustris (strain ATCC BAA-98 / CGA009), this protein is Imidazoleglycerol-phosphate dehydratase.